A 439-amino-acid polypeptide reads, in one-letter code: Ribosomal protein uS12 methylthiotransferase RimO (439 aa).

The region spanning 3–113 is the MTTase N-terminal domain; it reads HKVGFVSLGC…VVNAVHQHLP (111 aa). Cysteine 12, cysteine 48, cysteine 77, cysteine 144, cysteine 148, and cysteine 151 together coordinate [4Fe-4S] cluster. In terms of domain architecture, Radical SAM core spans 130–367; the sequence is LTPRHYAYLK…MQVQAEISRN (238 aa). The 67-residue stretch at 370-436 folds into the TRAM domain; the sequence is KNKIGSTQTV…DYDLYGDLEY (67 aa).

The protein belongs to the methylthiotransferase family. RimO subfamily. The cofactor is [4Fe-4S] cluster.

It is found in the cytoplasm. It catalyses the reaction L-aspartate(89)-[ribosomal protein uS12]-hydrogen + (sulfur carrier)-SH + AH2 + 2 S-adenosyl-L-methionine = 3-methylsulfanyl-L-aspartate(89)-[ribosomal protein uS12]-hydrogen + (sulfur carrier)-H + 5'-deoxyadenosine + L-methionine + A + S-adenosyl-L-homocysteine + 2 H(+). Catalyzes the methylthiolation of an aspartic acid residue of ribosomal protein uS12. The protein is Ribosomal protein uS12 methylthiotransferase RimO of Legionella pneumophila (strain Corby).